Consider the following 216-residue polypeptide: LexA repressor (216 aa).

The H-T-H motif DNA-binding region spans 29–49; sequence RAEIAQALGFRSPNAAEDHLK. Residues serine 134 and lysine 171 each act as for autocatalytic cleavage activity in the active site.

This sequence belongs to the peptidase S24 family. In terms of assembly, homodimer.

It catalyses the reaction Hydrolysis of Ala-|-Gly bond in repressor LexA.. In terms of biological role, represses a number of genes involved in the response to DNA damage (SOS response), including recA and lexA. In the presence of single-stranded DNA, RecA interacts with LexA causing an autocatalytic cleavage which disrupts the DNA-binding part of LexA, leading to derepression of the SOS regulon and eventually DNA repair. The sequence is that of LexA repressor from Bordetella bronchiseptica (strain ATCC BAA-588 / NCTC 13252 / RB50) (Alcaligenes bronchisepticus).